A 105-amino-acid chain; its full sequence is Large ribosomal subunit protein uL24 (105 aa).

The protein belongs to the universal ribosomal protein uL24 family. Part of the 50S ribosomal subunit.

Its function is as follows. One of two assembly initiator proteins, it binds directly to the 5'-end of the 23S rRNA, where it nucleates assembly of the 50S subunit. Functionally, one of the proteins that surrounds the polypeptide exit tunnel on the outside of the subunit. This Aromatoleum aromaticum (strain DSM 19018 / LMG 30748 / EbN1) (Azoarcus sp. (strain EbN1)) protein is Large ribosomal subunit protein uL24.